Consider the following 401-residue polypeptide: Acetate kinase (401 aa).

A Mg(2+)-binding site is contributed by asparagine 7. Lysine 14 is an ATP binding site. Position 91 (arginine 91) interacts with substrate. Aspartate 148 acts as the Proton donor/acceptor in catalysis. ATP is bound by residues 208–212 (HLGNG), 283–285 (DFR), and 331–335 (GVGEN). Mg(2+) is bound at residue glutamate 384.

It belongs to the acetokinase family. Homodimer. Mg(2+) is required as a cofactor. Mn(2+) serves as cofactor.

Its subcellular location is the cytoplasm. It catalyses the reaction acetate + ATP = acetyl phosphate + ADP. It participates in metabolic intermediate biosynthesis; acetyl-CoA biosynthesis; acetyl-CoA from acetate: step 1/2. Catalyzes the formation of acetyl phosphate from acetate and ATP. Can also catalyze the reverse reaction. This Helicobacter hepaticus (strain ATCC 51449 / 3B1) protein is Acetate kinase.